We begin with the raw amino-acid sequence, 880 residues long: Alanine--tRNA ligase (880 aa).

4 residues coordinate Zn(2+): histidine 569, histidine 573, cysteine 671, and histidine 675.

Belongs to the class-II aminoacyl-tRNA synthetase family. As to quaternary structure, homotetramer. It depends on Zn(2+) as a cofactor.

It localises to the cytoplasm. It carries out the reaction tRNA(Ala) + L-alanine + ATP = L-alanyl-tRNA(Ala) + AMP + diphosphate. Its function is as follows. Catalyzes the attachment of alanine to tRNA(Ala) in a two-step reaction: alanine is first activated by ATP to form Ala-AMP and then transferred to the acceptor end of tRNA(Ala). Also edits incorrectly charged Ser-tRNA(Ala) and Gly-tRNA(Ala) via its editing domain. In Buchnera aphidicola subsp. Baizongia pistaciae (strain Bp), this protein is Alanine--tRNA ligase.